Reading from the N-terminus, the 975-residue chain is Exportin-2 (975 aa).

Residues 29 to 105 form the Importin N-terminal domain; that stretch reads AEKLLESTEL…KTLIVTLMLH (77 aa).

This sequence belongs to the XPO2/CSE1 family. As to quaternary structure, binds with high affinity to importin-alpha only in the presence of RanGTP.

Its subcellular location is the cytoplasm. The protein resides in the nucleus. In terms of biological role, export receptor for importin alpha. Mediates importin-alpha re-export from the nucleus to the cytoplasm after import substrates have been released into the nucleoplasm. The sequence is that of Exportin-2 from Drosophila melanogaster (Fruit fly).